A 371-amino-acid chain; its full sequence is 4-hydroxy-3-methylbut-2-en-1-yl diphosphate synthase (flavodoxin) (371 aa).

Residues Cys-270, Cys-273, Cys-305, and Glu-312 each contribute to the [4Fe-4S] cluster site.

This sequence belongs to the IspG family. [4Fe-4S] cluster serves as cofactor.

The enzyme catalyses (2E)-4-hydroxy-3-methylbut-2-enyl diphosphate + oxidized [flavodoxin] + H2O + 2 H(+) = 2-C-methyl-D-erythritol 2,4-cyclic diphosphate + reduced [flavodoxin]. Its pathway is isoprenoid biosynthesis; isopentenyl diphosphate biosynthesis via DXP pathway; isopentenyl diphosphate from 1-deoxy-D-xylulose 5-phosphate: step 5/6. In terms of biological role, converts 2C-methyl-D-erythritol 2,4-cyclodiphosphate (ME-2,4cPP) into 1-hydroxy-2-methyl-2-(E)-butenyl 4-diphosphate. The protein is 4-hydroxy-3-methylbut-2-en-1-yl diphosphate synthase (flavodoxin) of Shewanella piezotolerans (strain WP3 / JCM 13877).